The chain runs to 102 residues: Small integral membrane protein 29 (102 aa).

The N-linked (GlcNAc...) asparagine glycan is linked to Asn3. Residues 21–41 (VLGPFFLITLVGVVVAVVMYV) traverse the membrane as a helical segment.

Expressed in spleen, thymus, prostate, testis, uterus, small intestine, colon and peripheral blood leukocytes.

Its subcellular location is the membrane. In Homo sapiens (Human), this protein is Small integral membrane protein 29.